A 428-amino-acid chain; its full sequence is Glutamate-1-semialdehyde 2,1-aminomutase (428 aa).

At Lys-265 the chain carries N6-(pyridoxal phosphate)lysine.

This sequence belongs to the class-III pyridoxal-phosphate-dependent aminotransferase family. HemL subfamily. In terms of assembly, homodimer. Pyridoxal 5'-phosphate serves as cofactor.

It localises to the cytoplasm. It carries out the reaction (S)-4-amino-5-oxopentanoate = 5-aminolevulinate. Its pathway is porphyrin-containing compound metabolism; protoporphyrin-IX biosynthesis; 5-aminolevulinate from L-glutamyl-tRNA(Glu): step 2/2. In Vesicomyosocius okutanii subsp. Calyptogena okutanii (strain HA), this protein is Glutamate-1-semialdehyde 2,1-aminomutase.